We begin with the raw amino-acid sequence, 1407 residues long: Probable phosphoribosylformylglycinamidine synthase, chloroplastic/mitochondrial (1407 aa).

The N-terminal 53 residues, 1–53 (MNTSQATRAALFLNGSNRQAMLLQRSSMSQLWGSVRMRTSRLSLNRTKAVSLR), are a transit peptide targeting the chloroplast and mitochondrion. Residues 407-418 (GAETGAGGRIRD), 487-489 (QGY), and alanine 786 each bind ATP. Mg(2+) contacts are provided by aspartate 787, glutamate 826, asparagine 830, and aspartate 989. Serine 991 lines the ATP pocket. Positions 1141-1381 (KVAVIREEGS…LMWQFPWYPT (241 aa)) constitute a Glutamine amidotransferase type-1 domain. Cysteine 1235 serves as the catalytic Nucleophile. Residues histidine 1366 and glutamate 1368 contribute to the active site.

In the N-terminal section; belongs to the FGAMS family.

The protein localises to the plastid. The protein resides in the chloroplast. Its subcellular location is the mitochondrion. It carries out the reaction N(2)-formyl-N(1)-(5-phospho-beta-D-ribosyl)glycinamide + L-glutamine + ATP + H2O = 2-formamido-N(1)-(5-O-phospho-beta-D-ribosyl)acetamidine + L-glutamate + ADP + phosphate + H(+). The protein operates within purine metabolism; IMP biosynthesis via de novo pathway; 5-amino-1-(5-phospho-D-ribosyl)imidazole from N(2)-formyl-N(1)-(5-phospho-D-ribosyl)glycinamide: step 1/2. Its function is as follows. Essential to the male gametophyte development. Phosphoribosylformylglycinamidine synthase involved in the purines biosynthetic pathway. Catalyzes the ATP-dependent conversion of formylglycinamide ribonucleotide (FGAR) and glutamine to yield formylglycinamidine ribonucleotide (FGAM) and glutamate. The sequence is that of Probable phosphoribosylformylglycinamidine synthase, chloroplastic/mitochondrial from Arabidopsis thaliana (Mouse-ear cress).